A 529-amino-acid chain; its full sequence is Peptide chain release factor 3 (529 aa).

Residues 11–280 (AKRRTFAIIS…GLVEWAPAPM (270 aa)) form the tr-type G domain. Residues 20-27 (SHPDAGKT), 88-92 (DTPGH), and 142-145 (NKLD) contribute to the GTP site.

This sequence belongs to the TRAFAC class translation factor GTPase superfamily. Classic translation factor GTPase family. PrfC subfamily.

It is found in the cytoplasm. In terms of biological role, increases the formation of ribosomal termination complexes and stimulates activities of RF-1 and RF-2. It binds guanine nucleotides and has strong preference for UGA stop codons. It may interact directly with the ribosome. The stimulation of RF-1 and RF-2 is significantly reduced by GTP and GDP, but not by GMP. The chain is Peptide chain release factor 3 from Yersinia enterocolitica serotype O:8 / biotype 1B (strain NCTC 13174 / 8081).